The sequence spans 402 residues: Deoxyguanosinetriphosphate triphosphohydrolase-like protein (402 aa).

Residues 20 to 39 form a disordered region; the sequence is PAFSRGRLVPEPESPTRTPF. The region spanning 73–217 is the HD domain; that stretch reads RLTHTIEVAQ…AAIADDIAYN (145 aa).

This sequence belongs to the dGTPase family. Type 2 subfamily.

The sequence is that of Deoxyguanosinetriphosphate triphosphohydrolase-like protein from Brucella canis (strain ATCC 23365 / NCTC 10854 / RM-666).